Consider the following 87-residue polypeptide: Small ribosomal subunit protein eS21 (87 aa).

Methionine 1 is subject to N-acetylmethionine.

It belongs to the eukaryotic ribosomal protein eS21 family. In terms of assembly, component of the small ribosomal subunit (SSU). Mature yeast ribosomes consist of a small (40S) and a large (60S) subunit. The 40S small subunit contains 1 molecule of ribosomal RNA (18S rRNA) and at least 33 different proteins. The large 60S subunit contains 3 rRNA molecules (25S, 5.8S and 5S rRNA) and at least 46 different proteins. Interacts with uS2A and uS2B, strongest interaction is with uS2B.

Its subcellular location is the cytoplasm. It localises to the nucleus. Functionally, component of the ribosome, a large ribonucleoprotein complex responsible for the synthesis of proteins in the cell. The small ribosomal subunit (SSU) binds messenger RNAs (mRNAs) and translates the encoded message by selecting cognate aminoacyl-transfer RNA (tRNA) molecules. The large subunit (LSU) contains the ribosomal catalytic site termed the peptidyl transferase center (PTC), which catalyzes the formation of peptide bonds, thereby polymerizing the amino acids delivered by tRNAs into a polypeptide chain. The nascent polypeptides leave the ribosome through a tunnel in the LSU and interact with protein factors that function in enzymatic processing, targeting, and the membrane insertion of nascent chains at the exit of the ribosomal tunnel. eS21 is required for the processing of the 20S rRNA-precursor to mature 18S rRNA in a late step of the maturation of 40S ribosomal subunits. Has a physiological role leading to 18S rRNA stability. This is Small ribosomal subunit protein eS21 (rps21) from Schizosaccharomyces pombe (strain 972 / ATCC 24843) (Fission yeast).